A 377-amino-acid polypeptide reads, in one-letter code: Alanine racemase (377 aa).

The active-site Proton acceptor; specific for D-alanine is Lys-37. The residue at position 37 (Lys-37) is an N6-(pyridoxal phosphate)lysine. Arg-135 contacts substrate. Catalysis depends on Tyr-271, which acts as the Proton acceptor; specific for L-alanine. Met-319 is a binding site for substrate.

This sequence belongs to the alanine racemase family. Pyridoxal 5'-phosphate is required as a cofactor.

It carries out the reaction L-alanine = D-alanine. It functions in the pathway amino-acid biosynthesis; D-alanine biosynthesis; D-alanine from L-alanine: step 1/1. Its function is as follows. Catalyzes the interconversion of L-alanine and D-alanine. May also act on other amino acids. This is Alanine racemase (alr) from Helicobacter pylori (strain Shi470).